A 356-amino-acid chain; its full sequence is Protein RecA (356 aa).

An ATP-binding site is contributed by 68–75 (GPESSGKT).

The protein belongs to the RecA family.

The protein localises to the cytoplasm. Can catalyze the hydrolysis of ATP in the presence of single-stranded DNA, the ATP-dependent uptake of single-stranded DNA by duplex DNA, and the ATP-dependent hybridization of homologous single-stranded DNAs. It interacts with LexA causing its activation and leading to its autocatalytic cleavage. The sequence is that of Protein RecA from Clostridium botulinum (strain Alaska E43 / Type E3).